The chain runs to 121 residues: Large ribosomal subunit protein bL12 (121 aa).

Belongs to the bacterial ribosomal protein bL12 family. As to quaternary structure, homodimer. Part of the ribosomal stalk of the 50S ribosomal subunit. Forms a multimeric L10(L12)X complex, where L10 forms an elongated spine to which 2 to 4 L12 dimers bind in a sequential fashion. Binds GTP-bound translation factors.

Forms part of the ribosomal stalk which helps the ribosome interact with GTP-bound translation factors. Is thus essential for accurate translation. This is Large ribosomal subunit protein bL12 from Clostridioides difficile (strain 630) (Peptoclostridium difficile).